We begin with the raw amino-acid sequence, 357 residues long: DNA replication and repair protein RecF (357 aa).

30–37 contacts ATP; that stretch reads GANGSGKT.

It belongs to the RecF family.

It localises to the cytoplasm. Functionally, the RecF protein is involved in DNA metabolism; it is required for DNA replication and normal SOS inducibility. RecF binds preferentially to single-stranded, linear DNA. It also seems to bind ATP. This is DNA replication and repair protein RecF from Shigella boydii serotype 4 (strain Sb227).